Reading from the N-terminus, the 35-residue chain is Mu-theraphotoxin-Pm1a (35 aa).

Disulfide bonds link C3-C17, C10-C22, and C16-C29. Phenylalanine amide is present on F35.

Belongs to the neurotoxin 10 (Hwtx-1) family. 62 (Vatx) subfamily. As to expression, expressed by the venom gland.

Its subcellular location is the secreted. Gating-modifier toxin with weak activity on Nav1.7/SCN9A and Nav1.8/SCN10A. Inhibits Nav1.7/SCN9A peak current (IC(50)=334 nM) and shifts the voltage dependence of activation to more depolarised membrane potentials. Shows 21% peak current inhibition (at 10 uM) on Nav1.8/SCN10A sodium channels. The polypeptide is Mu-theraphotoxin-Pm1a (Poecilotheria metallica (Metallic blue ornamental tree spider)).